The primary structure comprises 399 residues: Lipid droplet-regulating VLDL assembly factor AUP1 (399 aa).

Residues 1 to 21 (MEQPSLESMLELQRFPRNPFS) are Cytoplasmic-facing. An intramembrane segment occupies 22–42 (LVLLLLYFPFGLCLFLIRLFI). Topologically, residues 43–399 (GAHVFLVSCV…GEEEEEGARG (357 aa)) are cytoplasmic. The CUE domain occupies 284–326 (THIQMAQHVKEVLPQVPLSAIHRDLGHTGCVDTTITNFLEGRV). Positions 332 to 364 (EEETTGAAEGTSKSRVSRPLPQGFAKKPEDRHL) are disordered.

It belongs to the AUP1 family.

The protein resides in the endoplasmic reticulum membrane. Its subcellular location is the lipid droplet. In terms of biological role, plays a role in the translocation of terminally misfolded proteins from the endoplasmic reticulum lumen to the cytoplasm and their degradation by the proteasome. Plays a role in lipid droplet formation. Induces lipid droplet clustering. The polypeptide is Lipid droplet-regulating VLDL assembly factor AUP1 (Xenopus laevis (African clawed frog)).